The primary structure comprises 447 residues: Asparagine--tRNA ligase (447 aa).

This sequence belongs to the class-II aminoacyl-tRNA synthetase family. Homodimer.

The protein localises to the cytoplasm. The enzyme catalyses tRNA(Asn) + L-asparagine + ATP = L-asparaginyl-tRNA(Asn) + AMP + diphosphate + H(+). This chain is Asparagine--tRNA ligase, found in Lactococcus lactis subsp. cremoris (strain MG1363).